Reading from the N-terminus, the 254-residue chain is MSLKKQIPIIFENTHYFIVNKPPGIPSQPPDCRTWGRTHPNLDPTPLLERFKAIYYSHREVELCRTVHRLDHCVTGGMLIAKTKDGSVKFSRFLQKGGNNGYKLQRKYVAIVESSGRFNKPNNYEIKYGPKYNFLISHGGREITKFKEVDENCIVLQLVTGKKHQIRNHVSQILNQPILNDKRHGSTVNFPELFNDQIALHSACIITKIGLQTKTHLIPMEHNNTGQLWSRKYVNEEGEFTLPIKEVLLENWDQ.

Asp-71 is an active-site residue.

This sequence belongs to the pseudouridine synthase RluA family.

The protein localises to the mitochondrion. It catalyses the reaction uridine(2819) in 21S rRNA = pseudouridine(2819) in 21S rRNA. Functionally, pseudouridylate synthase responsible for the pseudouridine-2819 formation in mitochondrial 21S rRNA. May modulate the efficiency or the fidelity of the mitochondrial translation machinery. This chain is 21S rRNA pseudouridine(2819) synthase (PUS5), found in Saccharomyces cerevisiae (strain ATCC 204508 / S288c) (Baker's yeast).